Reading from the N-terminus, the 56-residue chain is Large ribosomal subunit protein bL32 (56 aa).

Residues 1-35 (MAVQQNKPTRSKRGMRRSHDALTATHVSVDKTSGE) are disordered.

The protein belongs to the bacterial ribosomal protein bL32 family.

The polypeptide is Large ribosomal subunit protein bL32 (Proteus mirabilis (strain HI4320)).